The chain runs to 297 residues: MKVNGVEVEETFAEAFDIKIARVLITGYDYYWAWVAANEATGFGTSVIMCPAEAGIEIKAKPSETPDGRPGYYIQICHMSKKGLEEQLLARLGQCVLTAPTTAVFNGLPDAEEKFDTGFKLKFFADGYEKEVEVGGRKCWAVPMMEGDFIIENDIGYTNGIAGGNFFIMAETQPSALAAAKAAVDAISDVEGVITPFPGGIVASGSKVGANKYKFLKASTNEKFAPSIRDQVEGTQIPEGVKAVYEIVINGLNADAIKEATRVGILAATKIPGVVKITAGNYGGKLGKHIINLNELF.

It belongs to the FTR family. Homotetramer.

It is found in the cytoplasm. It catalyses the reaction N-formylmethanofuran + 5,6,7,8-tetrahydromethanopterin + H(+) = N(5)-formyl-5,6,7,8-tetrahydromethanopterin + methanofuran. The protein operates within metabolic intermediate metabolism; lactate oxidation. In terms of biological role, catalyzes the transfer of a formyl group from 5-formyl tetrahydromethanopterin (5-formyl-H(4)MPT) to methanofuran (MFR) to produce formylmethanofuran (formyl-MFR) and tetrahydromethanopterin (H(4)MPT). The protein is Formylmethanofuran--tetrahydromethanopterin formyltransferase of Archaeoglobus fulgidus (strain ATCC 49558 / DSM 4304 / JCM 9628 / NBRC 100126 / VC-16).